The sequence spans 515 residues: Serine--tRNA ligase, cytoplasmic (515 aa).

The interval 9 to 61 (RTDKGGDPEIIRETQRKRFKDVSLVDKLVQADTEWRKCRFTADNLNKAKNLCS) is interaction with tRNA. L-serine is bound by residues T271 and R302. Residues 302–304 (RQE) and 318–321 (VHQF) each bind ATP. Residue E325 participates in L-serine binding. 391-394 (ELVS) serves as a coordination point for ATP. Position 427 (N427) interacts with L-serine. Positions 475–515 (PIDQETTKKQKKQQEGGKKKKHQGGDADLENKVENMSVNDS) are disordered. Residues 479–507 (ETTKKQKKQQEGGKKKKHQGGDADLENKV) show a composition bias toward basic and acidic residues. The Nuclear localization signal motif lies at 482–494 (KKQKKQQEGGKKK).

Belongs to the class-II aminoacyl-tRNA synthetase family. Type-1 seryl-tRNA synthetase subfamily.

It is found in the cytoplasm. It localises to the nucleus. It carries out the reaction tRNA(Ser) + L-serine + ATP = L-seryl-tRNA(Ser) + AMP + diphosphate + H(+). It catalyses the reaction tRNA(Sec) + L-serine + ATP = L-seryl-tRNA(Sec) + AMP + diphosphate + H(+). Functionally, catalyzes the attachment of serine to tRNA(Ser) in a two-step reaction: serine is first activated by ATP to form Ser-AMP and then transferred to the acceptor end of tRNA(Ser). Is probably also able to aminoacylate tRNA(Sec) with serine, to form the misacylated tRNA L-seryl-tRNA(Sec), which will be further converted into selenocysteinyl-tRNA(Sec). In the nucleus, binds to the vegfa core promoter and prevents myc binding and transcriptional activation by myc. Thereby inhibits the production of vegfa and sprouting angiogenesis mediated by vegfa. This chain is Serine--tRNA ligase, cytoplasmic (sars1), found in Danio rerio (Zebrafish).